The primary structure comprises 513 residues: Aspartic proteinase A2 (513 aa).

A signal peptide spans 1 to 24 (MGVYSRAVAFSVFVSFLLFFTAYS). Positions 25–71 (KRNDGTFRVGLKKLKLDPNNRLATRFGSKQEEALRSSLRSYNNNLGG) are cleaved as a propeptide — activation peptide. One can recognise a Peptidase A1 domain in the interval 89–510 (YYGEIAIGTP…DFGNEQVGFA (422 aa)). Asp-107 is an active-site residue. Disulfide bonds link Cys-120–Cys-126 and Cys-285–Cys-289. Asp-294 is an active-site residue. The region spanning 319 to 424 (VVSQQCKTVV…NEICERMPSP (106 aa)) is the Saposin B-type domain. 4 cysteine pairs are disulfide-bonded: Cys-324/Cys-418, Cys-349/Cys-390, Cys-355/Cys-387, and Cys-432/Cys-469. Asn-404 carries an N-linked (GlcNAc...) asparagine glycan.

Belongs to the peptidase A1 family. Expressed in seed pods and dry seeds.

Its subcellular location is the vacuole. Functionally, involved in the breakdown of propeptides of storage proteins in protein-storage vacuoles. The chain is Aspartic proteinase A2 (APA2) from Arabidopsis thaliana (Mouse-ear cress).